The following is an 88-amino-acid chain: MALKEMVGTVVSDKMQKTVVVAVENRFPHPIYQKIISRTTRYKAHDAENHCKVGDRVRIKESPPISAHKRWTVTDVLVKGMKSKEAAK.

The protein belongs to the universal ribosomal protein uS17 family. Part of the 30S ribosomal subunit.

Its function is as follows. One of the primary rRNA binding proteins, it binds specifically to the 5'-end of 16S ribosomal RNA. This is Small ribosomal subunit protein uS17 from Prochlorococcus marinus (strain NATL1A).